We begin with the raw amino-acid sequence, 217 residues long: Probable chemoreceptor glutamine deamidase CheD (217 aa).

The tract at residues Ala-194–Ser-217 is disordered.

It belongs to the CheD family.

It carries out the reaction L-glutaminyl-[protein] + H2O = L-glutamyl-[protein] + NH4(+). Probably deamidates glutamine residues to glutamate on methyl-accepting chemotaxis receptors (MCPs), playing an important role in chemotaxis. In Cupriavidus pinatubonensis (strain JMP 134 / LMG 1197) (Cupriavidus necator (strain JMP 134)), this protein is Probable chemoreceptor glutamine deamidase CheD.